A 208-amino-acid chain; its full sequence is Large ribosomal subunit protein uL3 (208 aa).

Position 149 is an N5-methylglutamine (glutamine 149).

Belongs to the universal ribosomal protein uL3 family. In terms of assembly, part of the 50S ribosomal subunit. Forms a cluster with proteins L14 and L19. Methylated by PrmB.

One of the primary rRNA binding proteins, it binds directly near the 3'-end of the 23S rRNA, where it nucleates assembly of the 50S subunit. This chain is Large ribosomal subunit protein uL3, found in Haemophilus influenzae (strain 86-028NP).